The following is a 236-amino-acid chain: ATP synthase subunit a (236 aa).

Transmembrane regions (helical) follow at residues 17–37 (LANV…AVLA), 80–100 (MTLI…SVVI), 114–134 (VVTL…GIKL), 179–199 (ILLA…IAAI), and 208–228 (FSIF…MVYM).

Belongs to the ATPase A chain family. F-type ATPases have 2 components, CF(1) - the catalytic core - and CF(0) - the membrane proton channel. CF(1) has five subunits: alpha(3), beta(3), gamma(1), delta(1), epsilon(1). CF(0) has three main subunits: a(1), b(2) and c(9-12). The alpha and beta chains form an alternating ring which encloses part of the gamma chain. CF(1) is attached to CF(0) by a central stalk formed by the gamma and epsilon chains, while a peripheral stalk is formed by the delta and b chains.

It is found in the cell membrane. In terms of biological role, key component of the proton channel; it plays a direct role in the translocation of protons across the membrane. The chain is ATP synthase subunit a from Anoxybacillus flavithermus (strain DSM 21510 / WK1).